The sequence spans 139 residues: Aspartate 1-decarboxylase (139 aa).

Residue S25 is the Schiff-base intermediate with substrate; via pyruvic acid of the active site. Residue S25 is modified to Pyruvic acid (Ser). T57 is a substrate binding site. Y58 functions as the Proton donor in the catalytic mechanism. 73–75 (GAA) is a substrate binding site. The disordered stretch occupies residues 116 to 139 (ELGEDPAHAPAGSGLKDPRHPEGE).

Belongs to the PanD family. As to quaternary structure, heterooctamer of four alpha and four beta subunits. Requires pyruvate as cofactor. Post-translationally, is synthesized initially as an inactive proenzyme, which is activated by self-cleavage at a specific serine bond to produce a beta-subunit with a hydroxyl group at its C-terminus and an alpha-subunit with a pyruvoyl group at its N-terminus.

Its subcellular location is the cytoplasm. The enzyme catalyses L-aspartate + H(+) = beta-alanine + CO2. It functions in the pathway cofactor biosynthesis; (R)-pantothenate biosynthesis; beta-alanine from L-aspartate: step 1/1. In terms of biological role, catalyzes the pyruvoyl-dependent decarboxylation of aspartate to produce beta-alanine. The protein is Aspartate 1-decarboxylase of Corynebacterium urealyticum (strain ATCC 43042 / DSM 7109).